The following is a 163-amino-acid chain: MAKLHRLISAVLRLAAAGAAAAAAVIMVTSHETTSLFGIEMEAKYSYTPSFVFFVVAFAVTFAYSLLAAVLVRPGTTASRLVLLSDVTVGMLLTGAVAATGAISQVGKSGNEHAGWLPICAQVQAYCGHVMGALIAGFVSLLLYFLIIMYSLHAVAEPLCSCH.

Residues 1 to 7 (MAKLHRL) lie on the Cytoplasmic side of the membrane. The helical transmembrane segment at 8–28 (ISAVLRLAAAGAAAAAAVIMV) threads the bilayer. Over 29 to 50 (TSHETTSLFGIEMEAKYSYTPS) the chain is Extracellular. The helical transmembrane segment at 51–71 (FVFFVVAFAVTFAYSLLAAVL) threads the bilayer. At 72-80 (VRPGTTASR) the chain is on the cytoplasmic side. A helical membrane pass occupies residues 81-101 (LVLLSDVTVGMLLTGAVAATG). Over 102–129 (AISQVGKSGNEHAGWLPICAQVQAYCGH) the chain is Extracellular. A helical transmembrane segment spans residues 130–150 (VMGALIAGFVSLLLYFLIIMY). Residues 151 to 163 (SLHAVAEPLCSCH) are Cytoplasmic-facing.

It belongs to the Casparian strip membrane proteins (CASP) family. As to quaternary structure, homodimer and heterodimers.

The protein resides in the cell membrane. The polypeptide is CASP-like protein 1C2 (Zea mays (Maize)).